The sequence spans 72 residues: Translation initiation factor IF-1 (72 aa).

The S1-like domain occupies 1–72; that stretch reads MSKEDHIEME…SKARITFRHR (72 aa).

Belongs to the IF-1 family. In terms of assembly, component of the 30S ribosomal translation pre-initiation complex which assembles on the 30S ribosome in the order IF-2 and IF-3, IF-1 and N-formylmethionyl-tRNA(fMet); mRNA recruitment can occur at any time during PIC assembly.

It localises to the cytoplasm. One of the essential components for the initiation of protein synthesis. Stabilizes the binding of IF-2 and IF-3 on the 30S subunit to which N-formylmethionyl-tRNA(fMet) subsequently binds. Helps modulate mRNA selection, yielding the 30S pre-initiation complex (PIC). Upon addition of the 50S ribosomal subunit IF-1, IF-2 and IF-3 are released leaving the mature 70S translation initiation complex. The protein is Translation initiation factor IF-1 of Methylococcus capsulatus (strain ATCC 33009 / NCIMB 11132 / Bath).